The chain runs to 87 residues: Large ribosomal subunit protein bL27 (87 aa).

The disordered stretch occupies residues 1 to 21 (MAHKKAGGSSRNGRDSESKRL).

Belongs to the bacterial ribosomal protein bL27 family.

The sequence is that of Large ribosomal subunit protein bL27 from Burkholderia ambifaria (strain MC40-6).